The sequence spans 597 residues: Polyphenol oxidase latent form, chloroplastic (597 aa).

Residues 1–49 constitute a chloroplast transit peptide; it reads MATAPSPTTMGTYSSLISTNSFSTFLPNKSQLSLSGKSKHYVARRSSIS. The interval 49–70 is disordered; the sequence is SCKATNNNNSNNQNEQQEESSR. A thylakoid-targeting transit peptide spans 50-101; it reads CKATNNNNSNNQNEQQEESSRLLGKLDRRNILIGLGGLYGATTLDRKPFAFA. Over residues 54–63 the composition is skewed to low complexity; sequence NNNNSNNQNE. 2 disulfide bridges follow: Cys-112–Cys-128 and Cys-127–Cys-189. 6 residues coordinate Cu cation: His-188, His-209, His-218, His-341, His-345, and His-375. Positions 192 to 209 form a cross-link, 2'-(S-cysteinyl)-histidine (Cys-His); the sequence is CNGAYPQVGFTDNDIQVH.

Belongs to the tyrosinase family. In terms of assembly, monomer. Requires Cu(2+) as cofactor. As to expression, expressed in immature-green fruit.

The protein localises to the plastid. It is found in the chloroplast thylakoid lumen. The enzyme catalyses 2 catechol + O2 = 2 1,2-benzoquinone + 2 H2O. Activated in the presence of substrate at low pH. Specific activity fluctuates during fruit ripening, starting at immature-green stage, reaching a peak at the breaker stage, followed by a sharp decrease until the half-ripe stage to remain stable during the following development stages. Triggered by CuSO(4) and by low concentrations of SDS. Repressed by several inhibitors including 4-hexylresorcinol, ascorbic acid, benzoic acid, kojic acid, glutathione (reduced form), L-cysteine and sodium metabisulfite. Inhibited by various salt such as FeSO(4), KCl, NaCl, CaCl(2), MnCl(2), NiCl(2) and AlCl(3). Spontaneously activated during storage at 4 degrees Celsius. In terms of biological role, catalyzes the oxidation of mono- and o-diphenols to o-diquinones. Uses preferentially 4-methylcatechol and chlorogenic acid as substrates, followed by caffeic acid, pyrogallol, and catechol, but barely active toward dopamine and L-dopa. No activity detected with monophenols (e.g. phenol and tyramine). The polypeptide is Polyphenol oxidase latent form, chloroplastic (Prunus armeniaca (Apricot)).